We begin with the raw amino-acid sequence, 448 residues long: Probable glycine dehydrogenase (decarboxylating) subunit 1 (448 aa).

Belongs to the GcvP family. N-terminal subunit subfamily. The glycine cleavage system is composed of four proteins: P, T, L and H. In this organism, the P 'protein' is a heterodimer of two subunits.

It carries out the reaction N(6)-[(R)-lipoyl]-L-lysyl-[glycine-cleavage complex H protein] + glycine + H(+) = N(6)-[(R)-S(8)-aminomethyldihydrolipoyl]-L-lysyl-[glycine-cleavage complex H protein] + CO2. In terms of biological role, the glycine cleavage system catalyzes the degradation of glycine. The P protein binds the alpha-amino group of glycine through its pyridoxal phosphate cofactor; CO(2) is released and the remaining methylamine moiety is then transferred to the lipoamide cofactor of the H protein. The sequence is that of Probable glycine dehydrogenase (decarboxylating) subunit 1 from Thermomicrobium roseum (strain ATCC 27502 / DSM 5159 / P-2).